The primary structure comprises 156 residues: Large ribosomal subunit protein uL13 (156 aa).

It belongs to the universal ribosomal protein uL13 family. As to quaternary structure, part of the 50S ribosomal subunit.

Its function is as follows. This protein is one of the early assembly proteins of the 50S ribosomal subunit, although it is not seen to bind rRNA by itself. It is important during the early stages of 50S assembly. This is Large ribosomal subunit protein uL13 from Archaeoglobus fulgidus (strain ATCC 49558 / DSM 4304 / JCM 9628 / NBRC 100126 / VC-16).